A 568-amino-acid polypeptide reads, in one-letter code: Small ribosomal subunit protein bS1 (568 aa).

6 S1 motif domains span residues Lys39–Glu100, Gly118–Arg184, Gly205–Lys273, Gly290–Lys360, Gly377–Lys447, and Gly464–Lys533.

Belongs to the bacterial ribosomal protein bS1 family.

Binds mRNA; thus facilitating recognition of the initiation point. It is needed to translate mRNA with a short Shine-Dalgarno (SD) purine-rich sequence. The protein is Small ribosomal subunit protein bS1 (rpsA) of Rickettsia typhi (strain ATCC VR-144 / Wilmington).